A 527-amino-acid polypeptide reads, in one-letter code: Abrin-b (527 aa).

Glutamine 1 carries the post-translational modification Pyrrolidone carboxylic acid. An N-linked (GlcNAc...) asparagine glycan is attached at asparagine 110. Glutamate 163 is a catalytic residue. Intrachain disulfides connect cysteine 246/cysteine 268, cysteine 285/cysteine 304, and cysteine 328/cysteine 345. Positions 272–399 constitute a Ricin B-type lectin 1 domain; the sequence is YEPTVRIGGR…YLMRQGWRTG (128 aa). A 1-alpha repeat occupies 282 to 324; it reads NGMCVDVYDDGYHNGNRIIAWKCKDRLEENQLWTLKSDKTIRS. The 1-beta repeat unit spans residues 325–365; it reads NGKCLTTEGYAPGNYVMIYDCTSAVAEATYWEIWDNGTIIN. N-linked (GlcNAc...) asparagine glycans are attached at residues asparagine 360 and asparagine 400. The 1-gamma repeat unit spans residues 368-400; it reads SALVLSAESSSMGGTLTVQTNEYLMRQGWRTGN. Positions 402-526 constitute a Ricin B-type lectin 2 domain; that stretch reads TSPFVTSISG…GKPNQIWLTL (125 aa). The 2-alpha repeat unit spans residues 413 to 448; it reads SDLCMQAQGSNVWLAYCDNNKKEQQWALYTDGSIRS. Cystine bridges form between cysteine 416-cysteine 429 and cysteine 455-cysteine 472. The stretch at 452–491 is one 2-beta repeat; the sequence is TNNCLTSKDHKQGSPIVLMACSNGWASQRWLFRNDGSIYN. The stretch at 494–527 is one 2-gamma repeat; that stretch reads DDMVMDVKRSDPSLKEIILHPYHGKPNQIWLTLF.

This sequence in the N-terminal section; belongs to the ribosome-inactivating protein family. Type 2 RIP subfamily. Disulfide-linked dimer of A and B chains.

It carries out the reaction Endohydrolysis of the N-glycosidic bond at one specific adenosine on the 28S rRNA.. Its function is as follows. The A chain is responsible for inhibiting protein synthesis through the catalytic inactivation of 60S ribosomal subunits by removing adenine from position 4,324 of 28S rRNA. Abrin-a is more toxic than ricin. In terms of biological role, the B chain is a galactose-specific lectin that facilitates the binding of abrin to the cell membrane that precedes endocytosis. This is Abrin-b from Abrus precatorius (Indian licorice).